A 390-amino-acid chain; its full sequence is Transposase for insertion sequence element IS21 (390 aa).

The HTH IS21-type domain maps to 5–66 (EDFYMIKQMR…PFMDYIDMRL (62 aa)). Positions 20–39 (IVDIATQIGCSERTVRRYLK) form a DNA-binding region, H-T-H motif. The Integrase catalytic domain occupies 111–285 (FETQPRYQLQ…TPEQRFALEQ (175 aa)).

The protein belongs to the transposase IS21/IS408/IS1162 family.

Its function is as follows. Involved in the transposition of the insertion sequence. The sequence is that of Transposase for insertion sequence element IS21 (istA) from Pseudomonas aeruginosa.